A 420-amino-acid chain; its full sequence is Chaperone protein dnaJ 3 (420 aa).

Residues 14 to 75 (KFYEILGVPK…EKREIYDQYG (62 aa)) enclose the J domain. A CR-type zinc finger spans residues 135-219 (GTMKKLSLSR…CKGDKVIPEK (85 aa)). Residues Cys148, Cys151, Cys164, Cys167, Cys191, Cys194, Cys207, and Cys210 each coordinate Zn(2+). CXXCXGXG motif repeat units follow at residues 148–155 (CSKCNGKG), 164–171 (CGGCQGSG), 191–198 (CNECKGTG), and 207–214 (CPQCKGDK). The segment at 376 to 420 (ETTLHDVNIEDEMRRKAQAQREAYDDDDEDDDHPGGAQRVQCAQQ) is disordered. Positions 377–390 (TTLHDVNIEDEMRR) are enriched in basic and acidic residues. A Cysteine methyl ester modification is found at Cys417. Cys417 is lipidated: S-farnesyl cysteine. Positions 418-420 (AQQ) are cleaved as a propeptide — removed in mature form.

This sequence belongs to the DnaJ family. A/I subfamily. As to quaternary structure, homodimer. Requires Zn(2+) as cofactor. Post-translationally, farnesylated. As to expression, roots, shoots, flowers, siliques and cotyledons.

The protein resides in the membrane. Functionally, plays a continuous role in plant development probably in the structural organization of compartments. This Arabidopsis thaliana (Mouse-ear cress) protein is Chaperone protein dnaJ 3 (ATJ3).